Reading from the N-terminus, the 160-residue chain is Ribosomal RNA large subunit methyltransferase H (160 aa).

2 residues coordinate S-adenosyl-L-methionine: Leu76 and Gly108.

This sequence belongs to the RNA methyltransferase RlmH family. Homodimer.

The protein localises to the cytoplasm. The catalysed reaction is pseudouridine(1915) in 23S rRNA + S-adenosyl-L-methionine = N(3)-methylpseudouridine(1915) in 23S rRNA + S-adenosyl-L-homocysteine + H(+). Functionally, specifically methylates the pseudouridine at position 1915 (m3Psi1915) in 23S rRNA. This is Ribosomal RNA large subunit methyltransferase H from Afipia carboxidovorans (strain ATCC 49405 / DSM 1227 / KCTC 32145 / OM5) (Oligotropha carboxidovorans).